Reading from the N-terminus, the 1236-residue chain is Calcium-activated potassium channel subunit alpha-1 (1236 aa).

Residues 1–21 are compositionally biased toward gly residues; that stretch reads MANGGGGGGGSSGGGGGGGGS. Residues 1 to 61 are disordered; sequence MANGGGGGGG…SSSSSSSSSV (61 aa). Residues 1–86 are Extracellular-facing; that stretch reads MANGGGGGGG…VPCDSRGQRM (86 aa). Low complexity predominate over residues 39-60; it reads SSSSSSSSSSSSSSSSSSSSSS. Residues 87–107 form a helical membrane-spanning segment; the sequence is WWAFLASSMVTFFGGLFIILL. Over 108–178 the chain is Cytoplasmic; it reads WRTLKYLWTV…MISAQTLTGR (71 aa). 3 S-palmitoyl cysteine lipidation sites follow: Cys118, Cys119, and Cys121. Residues 179-199 form a helical membrane-spanning segment; that stretch reads VLVVLVFALSIGALVIYFIDS. Topologically, residues 200–214 are extracellular; sequence SNPIESCQNFYKDFT. The helical transmembrane segment at 215–235 threads the bilayer; the sequence is LQIDMAFNVFFLLYFGLRFIA. Topologically, residues 236–239 are cytoplasmic; sequence ANDK. Residues 240-260 form a helical membrane-spanning segment; sequence LWFWLEVNSVVDFFTVPPVFV. The Extracellular portion of the chain corresponds to 261–264; it reads SVYL. A helical membrane pass occupies residues 265 to 285; the sequence is NRSWLGLRFLRALRLIQFSEI. Topologically, residues 286-300 are cytoplasmic; that stretch reads LQFLNILKTSNSIKL. A helical transmembrane segment spans residues 301–321; that stretch reads VNLLSIFISTWLTAAGFIHLV. Residues 322–335 lie on the Extracellular side of the membrane; that stretch reads ENSGDPWENFQNNQ. An intramembrane region (pore-forming) is located at residues 336–358; it reads ALTYWECVYLLMVTMSTVGYGDV. The short motif at 352–355 is the Selectivity for potassium element; that stretch reads TVGY. The Extracellular portion of the chain corresponds to 359–367; the sequence is YAKTTLGRL. Residues 368–388 traverse the membrane as a helical segment; sequence FMVFFILGGLAMFASYVPEII. The Cytoplasmic portion of the chain corresponds to 389-1236; sequence ELIGNRKKYG…KQKYVQEERL (848 aa). One can recognise an RCK N-terminal 1 domain in the interval 407 to 549; it reads RKHIVVCGHI…WNWKEGDDAI (143 aa). Positions 439, 462, and 464 each coordinate Mg(2+). The interval 556–576 is segment S7; it reads LGFIAQSCLAQGLSTMLANLF. Positions 613–633 are segment S8; sequence LSFPTVCELCFVKLKLLMIAI. Residues 677–681 form a heme-binding motif region; it reads CKACH. Residues 757–787 form a disordered region; that stretch reads EDEQPSTLSPKKKQRNGGMRNSPNTSPKLMR. Thr763 is modified (phosphothreonine). Phosphoserine occurs at positions 765, 778, and 782. Positions 837–857 are segment S9; that stretch reads VLSGHVVVCIFGDVSSALIGL. Residues 839–983 enclose the RCK N-terminal 2 domain; it reads SGHVVVCIFG…MDRSSPDNSP (145 aa). Thr970 is modified (phosphothreonine). Ser978 and Ser982 each carry phosphoserine. The Calcium bowl signature appears at 1003 to 1025; it reads TELVNDTNVQFLDQDDDDDPDTE. Ca(2+) contacts are provided by Gln1012, Asp1015, Asp1018, and Asp1020. The segment S10 stretch occupies residues 1032-1052; that stretch reads FACGTAFAVSVLDSLMSATYF. Over residues 1186–1211 the composition is skewed to low complexity; the sequence is RASLSHSSHSSQSSSKKSSSVHSIPS. Residues 1186-1236 are disordered; that stretch reads RASLSHSSHSSQSSSKKSSSVHSIPSTANRQNRPKSRESRDKQKYVQEERL. Basic and acidic residues predominate over residues 1220 to 1236; the sequence is KSRESRDKQKYVQEERL. Residues Ser1221 and Ser1224 each carry the phosphoserine modification.

The protein belongs to the potassium channel family. Calcium-activated (TC 1.A.1.3) subfamily. KCa1.1/KCNMA1 sub-subfamily. Homotetramer; which constitutes the calcium-activated potassium channel. Interacts with RAB11B. Interacts with beta subunits KCNMB1, KCNMB2, KCNMB3 and KCNMB4. Interacts with gamma subunits LRRC26, LRRC38, LRRC52 and LRRC55. Beta and gamma subunits are accessory, and modulate its activity. Post-translationally, phosphorylated. Phosphorylation by kinases such as PKA and/or PKG. In smooth muscles, phosphorylation affects its activity. In terms of processing, palmitoylation by ZDHHC22 and ZDHHC23 within the intracellular linker between the S0 and S1 transmembrane domains regulates localization to the plasma membrane. Depalmitoylated by LYPLA1 and LYPLAL1, leading to retard exit from the trans-Golgi network. In terms of tissue distribution, widely expressed. Except in myocytes, it is almost ubiquitously expressed.

Its subcellular location is the cell membrane. It carries out the reaction K(+)(in) = K(+)(out). Its activity is regulated as follows. Ethanol and carbon monoxide-bound heme increase channel activation. Heme inhibits channel activation. Its function is as follows. Potassium channel activated by both membrane depolarization or increase in cytosolic Ca(2+) that mediates export of K(+). It is also activated by the concentration of cytosolic Mg(2+). Its activation dampens the excitatory events that elevate the cytosolic Ca(2+) concentration and/or depolarize the cell membrane. It therefore contributes to repolarization of the membrane potential. Plays a key role in controlling excitability in a number of systems, such as regulation of the contraction of smooth muscle, the tuning of hair cells in the cochlea, regulation of transmitter release, and innate immunity. In smooth muscles, its activation by high level of Ca(2+), caused by ryanodine receptors in the sarcoplasmic reticulum, regulates the membrane potential. In cochlea cells, its number and kinetic properties partly determine the characteristic frequency of each hair cell and thereby helps to establish a tonotopic map. Kinetics of KCNMA1 channels are determined by alternative splicing, phosphorylation status and its combination with modulating beta subunits. Highly sensitive to both iberiotoxin (IbTx) and charybdotoxin (CTX). Possibly induces sleep when activated by melatonin and through melatonin receptor MTNR1A-dependent dissociation of G-beta and G-gamma subunits, leading to increased sensitivity to Ca(2+) and reduced synaptic transmission. Functionally, potassium channel activated by both membrane depolarization or increase in cytosolic Ca(2+) that mediates export of K(+). The protein is Calcium-activated potassium channel subunit alpha-1 of Homo sapiens (Human).